We begin with the raw amino-acid sequence, 86 residues long: Small ribosomal subunit protein bS20 (86 aa).

A disordered region spans residues 1–25 (MANIKSQQKRNKTNERARLRNKSVK).

The protein belongs to the bacterial ribosomal protein bS20 family.

Binds directly to 16S ribosomal RNA. This Mycobacterium avium (strain 104) protein is Small ribosomal subunit protein bS20.